The sequence spans 730 residues: Probable G-protein coupled receptor 149 (730 aa).

The Extracellular segment spans residues 1-34 (MSFFLSNLTNDSRLWKVSHNSTDLMNSPETLTLS). Residues Asn7, Asn10, and Asn20 are each glycosylated (N-linked (GlcNAc...) asparagine). Residues 35 to 55 (LFCLICLMTLVALVGSIFSLV) traverse the membrane as a helical segment. The Cytoplasmic portion of the chain corresponds to 56–68 (SLLTMQYRTVVSM). Residues 69–89 (LVTSWSVDDLLSVLSVAIFMV) traverse the membrane as a helical segment. Residues 90 to 108 (LQWPREAPGYFQSLCTTSA) lie on the Extracellular side of the membrane. Cys104 and Cys181 form a disulfide bridge. The helical transmembrane segment at 109–131 (LLYMCQGLSSNLKATLIVFYNFY) threads the bilayer. Topologically, residues 132–148 (TMHRTVVSQSSSWRSGQ) are cytoplasmic. A helical membrane pass occupies residues 149–169 (VLGVALTVWAVSLLLASLPLC). Topologically, residues 170 to 188 (GWGVFVRTPWGCLTDCSSP) are extracellular. Residues 189 to 209 (YVLLLFAVYASAFGLLAVLSV) form a helical membrane-spanning segment. Over 210-308 (PLTHQLLCSE…SFPVSLAQKR (99 aa)) the chain is Cytoplasmic. Residues 309 to 329 (FALILALTKVILWLPMMIHMV) traverse the membrane as a helical segment. At 330–340 (VKHVVGFQSLP) the chain is on the extracellular side. A helical transmembrane segment spans residues 341–361 (VDMLSFLLTLLASTVTPVFVL). Residues 362–730 (SKRWAHLPCG…RKREAESKGN (369 aa)) are Cytoplasmic-facing.

It belongs to the G-protein coupled receptor 1 family. In terms of tissue distribution, expressed exclusively in brain and testis.

The protein localises to the cell membrane. Functionally, orphan receptor. This Rattus norvegicus (Rat) protein is Probable G-protein coupled receptor 149 (Gpr149).